The following is a 130-amino-acid chain: Small ribosomal subunit protein uS8 (130 aa).

The protein belongs to the universal ribosomal protein uS8 family. In terms of assembly, part of the 30S ribosomal subunit. Contacts proteins S5 and S12.

In terms of biological role, one of the primary rRNA binding proteins, it binds directly to 16S rRNA central domain where it helps coordinate assembly of the platform of the 30S subunit. The polypeptide is Small ribosomal subunit protein uS8 (Psychromonas ingrahamii (strain DSM 17664 / CCUG 51855 / 37)).